We begin with the raw amino-acid sequence, 342 residues long: Isopentenyl-diphosphate delta-isomerase (342 aa).

Position 11-12 (11-12) interacts with substrate; the sequence is RK. FMN is bound by residues serine 68, 69-71, serine 99, and asparagine 127; that span reads SMT. Position 99-101 (99-101) interacts with substrate; sequence SMR. Glutamine 162 contributes to the substrate binding site. Glutamate 163 contacts Mg(2+). FMN-binding positions include lysine 194, threonine 224, 274-276, and 295-296; these read GLK and AG.

This sequence belongs to the IPP isomerase type 2 family. As to quaternary structure, homooctamer. Dimer of tetramers. FMN is required as a cofactor. Requires NADPH as cofactor. Mg(2+) serves as cofactor.

The protein resides in the cytoplasm. It catalyses the reaction isopentenyl diphosphate = dimethylallyl diphosphate. Its function is as follows. Involved in the biosynthesis of isoprenoids. Catalyzes the 1,3-allylic rearrangement of the homoallylic substrate isopentenyl (IPP) to its allylic isomer, dimethylallyl diphosphate (DMAPP). The sequence is that of Isopentenyl-diphosphate delta-isomerase from Rickettsia canadensis (strain McKiel).